Reading from the N-terminus, the 101-residue chain is Small ribosomal subunit protein uS14 (101 aa).

Belongs to the universal ribosomal protein uS14 family. Part of the 30S ribosomal subunit. Contacts proteins S3 and S10.

Binds 16S rRNA, required for the assembly of 30S particles and may also be responsible for determining the conformation of the 16S rRNA at the A site. This is Small ribosomal subunit protein uS14 from Haemophilus influenzae (strain PittGG).